A 200-amino-acid polypeptide reads, in one-letter code: Large ribosomal subunit protein bL25 (200 aa).

This sequence belongs to the bacterial ribosomal protein bL25 family. CTC subfamily. As to quaternary structure, part of the 50S ribosomal subunit; part of the 5S rRNA/L5/L18/L25 subcomplex. Contacts the 5S rRNA. Binds to the 5S rRNA independently of L5 and L18.

In terms of biological role, this is one of the proteins that binds to the 5S RNA in the ribosome where it forms part of the central protuberance. In Caldicellulosiruptor bescii (strain ATCC BAA-1888 / DSM 6725 / KCTC 15123 / Z-1320) (Anaerocellum thermophilum), this protein is Large ribosomal subunit protein bL25.